Consider the following 631-residue polypeptide: Phosphomethylpyrimidine synthase (631 aa).

Substrate is bound by residues Asn239, Met268, Tyr297, His333, 353-355 (SRG), 394-397 (DGLR), and Glu433. Residue His437 participates in Zn(2+) binding. Tyr460 is a substrate binding site. Residue His501 coordinates Zn(2+). Residues Cys581, Cys584, and Cys589 each contribute to the [4Fe-4S] cluster site.

Belongs to the ThiC family. As to quaternary structure, homodimer. Requires [4Fe-4S] cluster as cofactor.

It catalyses the reaction 5-amino-1-(5-phospho-beta-D-ribosyl)imidazole + S-adenosyl-L-methionine = 4-amino-2-methyl-5-(phosphooxymethyl)pyrimidine + CO + 5'-deoxyadenosine + formate + L-methionine + 3 H(+). The protein operates within cofactor biosynthesis; thiamine diphosphate biosynthesis. Its function is as follows. Catalyzes the synthesis of the hydroxymethylpyrimidine phosphate (HMP-P) moiety of thiamine from aminoimidazole ribotide (AIR) in a radical S-adenosyl-L-methionine (SAM)-dependent reaction. The polypeptide is Phosphomethylpyrimidine synthase (Escherichia coli O139:H28 (strain E24377A / ETEC)).